A 152-amino-acid chain; its full sequence is Isoquinoline 1-oxidoreductase subunit alpha (152 aa).

Positions 1–77 (MIEFILNGQP…RQSVTTIEGL (77 aa)) constitute a 2Fe-2S ferredoxin-type domain. Positions 39, 44, and 47 each coordinate [2Fe-2S] cluster.

In terms of assembly, heterodimer of an alpha chain and a beta chain.

It catalyses the reaction isoquinoline + A + H2O = isoquinolin-1(2H)-one + AH2. In terms of biological role, specific towards N-containing N-heterocyclic substrates, including isoquinoline, isoquinolin-5-ol, phthalazine and quinazoline. This is Isoquinoline 1-oxidoreductase subunit alpha (iorA) from Brevundimonas diminuta (Pseudomonas diminuta).